We begin with the raw amino-acid sequence, 372 residues long: Alanine dehydrogenase 2 (372 aa).

Residue His-95 is part of the active site. 169 to 199 lines the NAD(+) pocket; it reads KVTIIGGGQAGTNAAKIALGLGADVTILDVN.

This sequence belongs to the AlaDH/PNT family.

The enzyme catalyses L-alanine + NAD(+) + H2O = pyruvate + NH4(+) + NADH + H(+). The protein operates within amino-acid degradation; L-alanine degradation via dehydrogenase pathway; NH(3) and pyruvate from L-alanine: step 1/1. Its function is as follows. May play a role in cell wall synthesis as L-alanine is an important constituent of the peptidoglycan layer. In Staphylococcus aureus (strain Mu50 / ATCC 700699), this protein is Alanine dehydrogenase 2 (ald2).